Consider the following 216-residue polypeptide: ATP-dependent Clp protease proteolytic subunit 3 (216 aa).

Residue serine 120 is the Nucleophile of the active site. Histidine 145 is an active-site residue.

The protein belongs to the peptidase S14 family. As to quaternary structure, fourteen ClpP subunits assemble into 2 heptameric rings which stack back to back to give a disk-like structure with a central cavity, resembling the structure of eukaryotic proteasomes.

The protein localises to the cytoplasm. It carries out the reaction Hydrolysis of proteins to small peptides in the presence of ATP and magnesium. alpha-casein is the usual test substrate. In the absence of ATP, only oligopeptides shorter than five residues are hydrolyzed (such as succinyl-Leu-Tyr-|-NHMec, and Leu-Tyr-Leu-|-Tyr-Trp, in which cleavage of the -Tyr-|-Leu- and -Tyr-|-Trp bonds also occurs).. Functionally, cleaves peptides in various proteins in a process that requires ATP hydrolysis. Has a chymotrypsin-like activity. Plays a major role in the degradation of misfolded proteins. This Prochlorococcus marinus (strain SARG / CCMP1375 / SS120) protein is ATP-dependent Clp protease proteolytic subunit 3.